A 364-amino-acid chain; its full sequence is Peptide chain release factor 1 (364 aa).

An N5-methylglutamine modification is found at glutamine 230.

Belongs to the prokaryotic/mitochondrial release factor family. Post-translationally, methylated by PrmC. Methylation increases the termination efficiency of RF1.

The protein resides in the cytoplasm. Its function is as follows. Peptide chain release factor 1 directs the termination of translation in response to the peptide chain termination codons UAG and UAA. This is Peptide chain release factor 1 from Acidothermus cellulolyticus (strain ATCC 43068 / DSM 8971 / 11B).